The chain runs to 503 residues: ATP synthase subunit alpha (503 aa).

Position 170-177 (170-177 (GDRKTGKT)) interacts with ATP.

Belongs to the ATPase alpha/beta chains family. F-type ATPases have 2 components, CF(1) - the catalytic core - and CF(0) - the membrane proton channel. CF(1) has five subunits: alpha(3), beta(3), gamma(1), delta(1), epsilon(1). CF(0) has four main subunits: a(1), b(1), b'(1) and c(9-12).

The protein localises to the cellular thylakoid membrane. The catalysed reaction is ATP + H2O + 4 H(+)(in) = ADP + phosphate + 5 H(+)(out). Functionally, produces ATP from ADP in the presence of a proton gradient across the membrane. The alpha chain is a regulatory subunit. The protein is ATP synthase subunit alpha of Synechocystis sp. (strain ATCC 27184 / PCC 6803 / Kazusa).